Reading from the N-terminus, the 233-residue chain is Segregation and condensation protein A (233 aa).

The protein belongs to the ScpA family. In terms of assembly, component of a cohesin-like complex composed of ScpA, ScpB and the Smc homodimer, in which ScpA and ScpB bind to the head domain of Smc. The presence of the three proteins is required for the association of the complex with DNA.

Its subcellular location is the cytoplasm. In terms of biological role, participates in chromosomal partition during cell division. May act via the formation of a condensin-like complex containing Smc and ScpB that pull DNA away from mid-cell into both cell halves. The sequence is that of Segregation and condensation protein A from Streptococcus pyogenes serotype M1.